We begin with the raw amino-acid sequence, 233 residues long: Ribosome maturation factor RimP (233 aa).

Positions 167–179 (RGKAAEREKKRDL) are enriched in basic and acidic residues. Residues 167 to 233 (RGKAAEREKK…RARRGEIDPD (67 aa)) are disordered. Low complexity predominate over residues 187 to 196 (PHAKPAAQAK). Residues 220–233 (LAADRARRGEIDPD) are compositionally biased toward basic and acidic residues.

This sequence belongs to the RimP family.

The protein localises to the cytoplasm. Functionally, required for maturation of 30S ribosomal subunits. The chain is Ribosome maturation factor RimP from Bradyrhizobium sp. (strain ORS 278).